We begin with the raw amino-acid sequence, 185 residues long: Protein E3 homolog (185 aa).

Residues 7 to 73 (TVNDAEIFSL…SNPPKWFKNY (67 aa)) enclose the Z-binding domain. In terms of domain architecture, DRBM spans 112-179 (NPCIVLNEYC…SKITMDEILD (68 aa)).

Belongs to the poxviridae E3 protein family.

Its function is as follows. RNA-binding protein that plays a role in the inhibition of multiple cellular antiviral responses activated by double-stranded RNA (dsRNA), such as inhibition of PKR activation, necroptosis, and IFN-mediated antiviral activities. Recognizes and binds Z-RNA structures via its Z-binding domain and dsRNA via its DRBM domain: RNA-binding activity is required to escape host ZBP1-dependent necroptosis. Mechanistically, the Z-binding domain binds Z-RNAs that are produced during Yaba-like disease virus infection, thereby competing with Z-RNA detection by host ZBP1, suppressing ZBP1-dependent necroptosis. The polypeptide is Protein E3 homolog (Yaba-like disease virus (YLDV)).